A 79-amino-acid chain; its full sequence is MKKKLFALLKYIIFFPMLCTVLGLLGIPIGLIVNFLRTGSFDFNLKDEIDVVLFTLKIGIPIGFILGLGLWGLSILDRK.

Transmembrane regions (helical) follow at residues 12–32 and 51–71; these read IIFF…IGLI and VVLF…LGLW.

As to quaternary structure, probably interacts with cognate toxin CdiA.

It is found in the cell inner membrane. Functionally, immunity protein component of a toxin-immunity protein module, which functions as a cellular contact-dependent growth inhibition (CDI) system. CDI modules allow bacteria to communicate with and inhibit the growth of closely related neighboring bacteria in a contact-dependent fashion. Protects cells against CdiA from the same strain, its cognate toxin protein. Growth inhibition is reversible upon induction of this protein, occurring about 2.5 hours after induction, and requires an energy source. Does not protect against non-cognate CdiA from E.coli strain 563 / UPEC, D.dadantii strain 3937 or Y.pestis strain CO92. The protein is Immunity protein CdiI of Escherichia coli.